The chain runs to 94 residues: MSRSVWKPPFLHPSVLRLVQRALKEGSINKVIKIHSRASVILPNCLGLKFAVYNGKDYIPVSVDNQNMIGHKFGEFSPTRKFTGHGGDKKATRR.

The protein belongs to the universal ribosomal protein uS19 family.

Protein S19 forms a complex with S13 that binds strongly to the 16S ribosomal RNA. This is Small ribosomal subunit protein uS19 from Wolbachia pipientis subsp. Culex pipiens (strain wPip).